A 597-amino-acid chain; its full sequence is HECT-type ubiquitin ligase-interacting protein creD (597 aa).

3 disordered regions span residues 375 to 398, 439 to 492, and 576 to 597; these read EVDPSGYRTPGPGSGPGTPFGTLS, ASEH…MATP, and SRSHSHSDDERRIRLTQARGRA. Positions 452–466 are enriched in polar residues; that stretch reads GPPSGSNTHGSNTHA. The segment covering 472-483 has biased composition (basic and acidic residues); the sequence is LSRRASDEDVHD.

The protein belongs to the arrestin family. In terms of assembly, interacts with hulA.

In terms of biological role, component of the regulatory network controlling carbon source utilization through ubiquitination and deubiquitination involving creA, creB, creC, creD and acrB. May be involved in signaling by recognizing appropriately phosphorylated substrates via its arrestin domains and then recruit a HECT-type ubiquitin ligase such as hulA, leading to ubiquitination of the substrate, providing a link between ubiquitination and phosphorylation in protein regulation and stability. This chain is HECT-type ubiquitin ligase-interacting protein creD (creD), found in Emericella nidulans (strain FGSC A4 / ATCC 38163 / CBS 112.46 / NRRL 194 / M139) (Aspergillus nidulans).